A 190-amino-acid polypeptide reads, in one-letter code: dCTP deaminase (190 aa).

Position 113–118 (113–118 (KSTYAR)) interacts with dCTP. Glu-139 functions as the Proton donor/acceptor in the catalytic mechanism. DCTP contacts are provided by Gln-158, Tyr-172, Lys-181, and Gln-182.

It belongs to the dCTP deaminase family. Homotrimer.

It carries out the reaction dCTP + H2O + H(+) = dUTP + NH4(+). It participates in pyrimidine metabolism; dUMP biosynthesis; dUMP from dCTP (dUTP route): step 1/2. In terms of biological role, catalyzes the deamination of dCTP to dUTP. The polypeptide is dCTP deaminase (Chlamydia trachomatis serovar L2 (strain ATCC VR-902B / DSM 19102 / 434/Bu)).